The primary structure comprises 294 residues: Mitochondrial substrate carrier family protein ucpB (294 aa).

At 1–10 the chain is on the mitochondrial intermembrane side; that stretch reads MTSQESIGIK. Solcar repeat units lie at residues 9–93, 101–187, and 197–288; these read IKFL…IKNY, TNLL…IKHM, and DGLQ…LRKV. The helical transmembrane segment at 11–31 threads the bilayer; the sequence is FLFGGLSCMGAAVVSNPVDVL. The Mitochondrial matrix portion of the chain corresponds to 32 to 67; sequence KTRFQIHGEGIDSKSLGLVNGTIKIIKNEGISAMYK. Residues 68-88 form a helical membrane-spanning segment; sequence GLTPSLLREATYSTLRMGGYD. Residues 89-106 are Mitochondrial intermembrane-facing; that stretch reads VIKNYFIDSNGKTNLLSK. The chain crosses the membrane as a helical span at residues 107–127; that stretch reads VTSGALSGALGACITSPTDLI. Topologically, residues 128–161 are mitochondrial matrix; the sequence is KVRMQASSKGVKYDSISSAFKEIIAKEGIKGLWK. Residues 162–182 form a helical membrane-spanning segment; sequence GVGPTTQRAALLTASQIPSYD. Topologically, residues 183 to 192 are mitochondrial intermembrane; sequence HIKHMILDHG. The chain crosses the membrane as a helical span at residues 193–213; the sequence is IIQVDGLQVHIVSSIFAGLIA. At 214 to 267 the chain is on the mitochondrial matrix side; it reads SITTSPVDLVKTRIMNQPFDSNGVGLIYKSSYDCFKKTFQSEGISGLYKGFLPN. Residues 268–285 traverse the membrane as a helical segment; the sequence is WFRIGPHTIVTFILYEYL. Residues 286 to 294 lie on the Mitochondrial intermembrane side of the membrane; it reads RKVSGIKPI.

The protein belongs to the mitochondrial carrier (TC 2.A.29) family.

The protein resides in the mitochondrion inner membrane. Mitochondrial solute carriers shuttle metabolites, nucleotides, and cofactors through the mitochondrial inner membrane. The protein is Mitochondrial substrate carrier family protein ucpB (ucpB) of Dictyostelium discoideum (Social amoeba).